The chain runs to 284 residues: Four and a half LIM domains protein 5 (284 aa).

The C4-type zinc finger occupies 8–32 (CQYCTASLLGKKYVLKDDNLYCISC). 4 consecutive LIM zinc-binding domains span residues 39–100 (NYCE…ECSS), 101–160 (KCFH…KEFA), 161–220 (HYCN…LYAK), and 221–283 (KCAA…ADTD).

As to quaternary structure, interacts with CREM (via the third LIM domain). Interacts (via second LIM domain) with SPAG8.

It is found in the nucleus. May be involved in the regulation of spermatogenesis. Stimulates CREM transcriptional activity in a phosphorylation-independent manner. The protein is Four and a half LIM domains protein 5 (Fhl5) of Rattus norvegicus (Rat).